Here is an 84-residue protein sequence, read N- to C-terminus: Exodeoxyribonuclease 7 small subunit (84 aa).

It belongs to the XseB family. As to quaternary structure, heterooligomer composed of large and small subunits.

The protein localises to the cytoplasm. The enzyme catalyses Exonucleolytic cleavage in either 5'- to 3'- or 3'- to 5'-direction to yield nucleoside 5'-phosphates.. Functionally, bidirectionally degrades single-stranded DNA into large acid-insoluble oligonucleotides, which are then degraded further into small acid-soluble oligonucleotides. The chain is Exodeoxyribonuclease 7 small subunit from Azoarcus sp. (strain BH72).